Consider the following 182-residue polypeptide: Chromophore lyase CpcS/CpeS (182 aa).

The protein belongs to the CpcS/CpeS biliprotein lyase family.

Its function is as follows. Covalently attaches a chromophore to Cys residue(s) of phycobiliproteins. The polypeptide is Chromophore lyase CpcS/CpeS (Thermosynechococcus vestitus (strain NIES-2133 / IAM M-273 / BP-1)).